A 265-amino-acid polypeptide reads, in one-letter code: Probable protein VP2 (265 aa).

Disordered regions lie at residues 44–110 (RLGR…DDLS), 152–171 (STRS…SDVA), and 194–265 (VQNA…CSSN). The segment covering 48 to 60 (PQPPRPPGGPPGP) has biased composition (pro residues). A compositionally biased stretch (low complexity) spans 152–168 (STRSTSTRASRSTDGTS). Basic residues predominate over residues 221–242 (GKTRPRKKPRAKQKPKKRRRYR). Residues 243–265 (SSSNSSSKSNDSSDAESSTCSSN) show a composition bias toward low complexity.

Phosphorylated at C-terminal serines.

The sequence is that of Probable protein VP2 from Torque teno virus (isolate Human/Germany/KAV/2001) (TTV).